Here is a 443-residue protein sequence, read N- to C-terminus: Transcriptional adapter 2-alpha (443 aa).

Serine 6 is subject to Phosphoserine. The ZZ-type zinc finger occupies 12–69; that stretch reads SDKPPCRGCSSYLMEPYIKCAECGPPPFFLCLQCFTRGFEYKKHQSDHTYEIMTSDFP. 8 residues coordinate Zn(2+): cysteine 17, cysteine 20, cysteine 31, cysteine 34, cysteine 42, cysteine 45, histidine 55, and histidine 59. One can recognise an SANT domain in the interval 70-122; it reads VLDPSWTAQEEMALLEAVMDCGFGNWQDVANQMCTKTKEECEKHYMKHFINNP. Glycyl lysine isopeptide (Lys-Gly) (interchain with G-Cter in SUMO2) cross-links involve residues lysine 132 and lysine 138. The segment covering 347-359 has biased composition (polar residues); it reads LSPSVPMTSNSGR. Residues 347–372 form a disordered region; it reads LSPSVPMTSNSGRRSAPPLNLTGLPG. Residues 356–443 form the SWIRM domain; sequence NSGRRSAPPL…LIREGYITKA (88 aa). The DNA-binding element occupies 426 to 435; sequence KTRKIYDFLI.

Interacts with GCN5 and NR3C1. Associated with the P/CAF protein in the PCAF complex. Component of the PCAF complex, at least composed of TADA2L/ADA2, TADA3L/ADA3, TAF5L/PAF65-beta, TAF6L/PAF65-alpha, TAF10/TAFII30, TAF12/TAFII20, TAF9/TAFII31 and TRRAP. Component of the ADA2A-containing complex (ATAC), composed of KAT14, KAT2A, TADA2L, TADA3L, ZZ3, MBIP, WDR5, YEATS2, CCDC101 and DR1. Interacts with CCDC134.

The protein localises to the nucleus. It localises to the chromosome. Its function is as follows. Component of the ATAC complex, a complex with histone acetyltransferase activity on histones H3 and H4. Required for the function of some acidic activation domains, which activate transcription from a distant site. Binds double-stranded DNA. Binds dinucleosomes, probably at the linker region between neighboring nucleosomes. Plays a role in chromatin remodeling. May promote TP53/p53 'Lys-321' acetylation, leading to reduced TP53 stability and transcriptional activity. May also promote XRCC6 acetylation thus facilitating cell apoptosis in response to DNA damage. This Bos taurus (Bovine) protein is Transcriptional adapter 2-alpha (TADA2A).